The sequence spans 210 residues: Dynein regulatory complex protein 12 (210 aa).

A disordered region spans residues 1-23 (MPPKNKEKGKKSGAQKKKKNWGA). Positions 7–20 (EKGKKSGAQKKKKN) are enriched in basic residues. The stretch at 49–161 (RDEARRAKAS…EAKYEEILHD (113 aa)) forms a coiled coil. Residues 188–210 (HKEQQRQFGLTPPGSLRPPAPSL) form a disordered region.

This sequence belongs to the DRC12 family. Component of the nexin-dynein regulatory complex (N-DRC).

It is found in the cytoplasm. Its subcellular location is the cytoskeleton. The protein resides in the flagellum axoneme. Its function is as follows. Component of the nexin-dynein regulatory complex (N-DRC), a key regulator of ciliary/flagellar motility which maintains the alignment and integrity of the distal axoneme and regulates microtubule sliding in motile axonemes. In Homo sapiens (Human), this protein is Dynein regulatory complex protein 12.